A 313-amino-acid chain; its full sequence is ADP-L-glycero-D-manno-heptose-6-epimerase (313 aa).

NADP(+) is bound by residues 10–11 (MI), 31–32 (DN), Lys-38, Lys-53, 75–79 (EGACS), and Asn-92. The active-site Proton acceptor is the Tyr-139. Lys-143 is a binding site for NADP(+). Residue Asn-174 coordinates substrate. NADP(+)-binding residues include Val-175 and Lys-183. Lys-183 acts as the Proton acceptor in catalysis. Residues Ser-185, His-192, 206-209 (FEGS), Arg-214, and Tyr-277 each bind substrate.

The protein belongs to the NAD(P)-dependent epimerase/dehydratase family. HldD subfamily. In terms of assembly, homopentamer. NADP(+) is required as a cofactor.

It carries out the reaction ADP-D-glycero-beta-D-manno-heptose = ADP-L-glycero-beta-D-manno-heptose. The protein operates within nucleotide-sugar biosynthesis; ADP-L-glycero-beta-D-manno-heptose biosynthesis; ADP-L-glycero-beta-D-manno-heptose from D-glycero-beta-D-manno-heptose 7-phosphate: step 4/4. Its function is as follows. Catalyzes the interconversion between ADP-D-glycero-beta-D-manno-heptose and ADP-L-glycero-beta-D-manno-heptose via an epimerization at carbon 6 of the heptose. This is ADP-L-glycero-D-manno-heptose-6-epimerase from Aliivibrio fischeri (strain ATCC 700601 / ES114) (Vibrio fischeri).